Reading from the N-terminus, the 435-residue chain is Histidine--tRNA ligase (435 aa).

Residues serine 415 to glutamate 435 form a disordered region. The span at aspartate 424 to glutamate 435 shows a compositional bias: basic and acidic residues.

Belongs to the class-II aminoacyl-tRNA synthetase family.

It is found in the cytoplasm. The catalysed reaction is tRNA(His) + L-histidine + ATP = L-histidyl-tRNA(His) + AMP + diphosphate + H(+). The polypeptide is Histidine--tRNA ligase (Haloarcula marismortui (strain ATCC 43049 / DSM 3752 / JCM 8966 / VKM B-1809) (Halobacterium marismortui)).